Reading from the N-terminus, the 230-residue chain is Cytidylate kinase (230 aa).

12–20 lines the ATP pocket; the sequence is GPSGAGKGT.

It belongs to the cytidylate kinase family. Type 1 subfamily.

The protein resides in the cytoplasm. It carries out the reaction CMP + ATP = CDP + ADP. It catalyses the reaction dCMP + ATP = dCDP + ADP. The chain is Cytidylate kinase from Shewanella loihica (strain ATCC BAA-1088 / PV-4).